We begin with the raw amino-acid sequence, 1019 residues long: Insulin-degrading enzyme (1019 aa).

His-108 is a Zn(2+) binding site. Glu-111 (proton acceptor) is an active-site residue. Residues His-112 and Glu-189 each coordinate Zn(2+). Lys-192 is modified (N6-succinyllysine). Substrate is bound at residue 359 to 363 (LVGGQ). An ATP-binding site is contributed by Arg-429. Lys-697 bears the N6-succinyllysine mark. Residues 853–858 (EKPPHY) carry the SlyX motif motif. 895 to 901 (DKPKKLS) serves as a coordination point for ATP.

The protein belongs to the peptidase M16 family. Homodimer. Can also form homotetramers. Zn(2+) is required as a cofactor. In terms of tissue distribution, detected in brain and liver (at protein level). Detected in liver.

Its subcellular location is the cytoplasm. The protein resides in the cytosol. The protein localises to the cell membrane. It is found in the secreted. The catalysed reaction is Degradation of insulin, glucagon and other polypeptides. No action on proteins.. With respect to regulation, activated by ATP, other nucleotide triphosphates and small peptides. Inhibited by bacitracin. Functionally, plays a role in the cellular breakdown of insulin, APP peptides, IAPP peptides, natriuretic peptides, glucagon, bradykinin, kallidin, and other peptides, and thereby plays a role in intercellular peptide signaling. Substrate binding induces important conformation changes, making it possible to bind and degrade larger substrates, such as insulin. Contributes to the regulation of peptide hormone signaling cascades and regulation of blood glucose homeostasis via its role in the degradation of insulin, glucagon and IAPP. Plays a role in the degradation and clearance of APP-derived amyloidogenic peptides that are secreted by neurons and microglia. Degrades the natriuretic peptides ANP, BNP and CNP, inactivating their ability to raise intracellular cGMP. Also degrades an aberrant frameshifted 40-residue form of NPPA (fsNPPA) which is associated with familial atrial fibrillation in heterozygous patients. Involved in antigen processing. Produces both the N terminus and the C terminus of MAGEA3-derived antigenic peptide (EVDPIGHLY) that is presented to cytotoxic T lymphocytes by MHC class I. In Mus musculus (Mouse), this protein is Insulin-degrading enzyme (Ide).